The following is a 586-amino-acid chain: Scavenger receptor cysteine-rich domain-containing group B protein (586 aa).

The segment at 1–33 (MGPSERPSIGWTPKEAEMQIGPQPDGWSRGWKP) is disordered. An N-terminal signal peptide occupies residues 1–58 (MGPSERPSIGWTPKEAEMQIGPQPDGWSRGWKPGDRGAVPLPLSPALSFLLLFPLASA). 4 consecutive SRCR domains span residues 69–169 (LRLV…VLCD), 200–300 (VRLV…VLCA), 355–455 (LRLV…ALCA), and 484–584 (LRLA…VLCQ). 12 disulfide bridges follow: C94-C158, C107-C168, C138-C148, C225-C289, C238-C299, C269-C279, C380-C444, C393-C454, C424-C434, C509-C573, C522-C583, and C553-C563.

Its subcellular location is the secreted. The polypeptide is Scavenger receptor cysteine-rich domain-containing group B protein (Mus musculus (Mouse)).